The chain runs to 492 residues: E1B 55 kDa protein (492 aa).

The disordered stretch occupies residues 22–112 (ENMEGSQDED…ERNPSGNNSR (91 aa)). The segment covering 34 to 44 (RLLASAASGSS) has biased composition (low complexity). Phosphoserine is present on residues serine 486 and serine 487. A Phosphothreonine modification is found at threonine 491.

Belongs to the adenoviridae E1B 55 kDa protein family. In terms of assembly, interacts with host PML-4 and PML-5; this interaction promotes efficient subnuclear targeting of E1B-55K to PML nuclear bodies. Interacts with E4-ORF3 protein. Interacts with E4-ORF6 protein.

The protein localises to the host nucleus. Its subcellular location is the host cytoplasm. Its function is as follows. Plays a major role to prevent cellular inhibition of viral genome replication. Assembles an SCF-like E3 ubiquitin ligase complex based on the cellular proteins ELOB, ELOC, CUL5 and RBX1, in cooperation with viral E4orf6. This viral RING-type ligase ubiquitinates cellular substrates and targets them to proteasomal degradation: TP53/p53, LIG4, MRE11-RAD50-NBS1 (MRN) complex, ITGA3, DAXX and BLM. E1B-55K probably acts as the substrate-specific adapter of the SCF-like E3 ubiquitin ligase complex. Degradation of host TP53/p53 activity is essential for preventing E1A-induced TP53 accumulation that would otherwise lead to cell apoptosis and growth arrest. E1B-55K also inactivates TP53 transcription-factor activity by binding its transactivation domain. E1B-55K also functions as a SUMO1 E3 ligase for TP53 which causes the latter to be sequestered in promyelocytic leukemia (PML) nuclear bodies thereby contributing to maximal inhibition of TP53 function. The sequence is that of E1B 55 kDa protein from Human adenovirus B serotype 7 (HAdV-7).